Here is a 487-residue protein sequence, read N- to C-terminus: Galactose-1-phosphate uridylyltransferase (487 aa).

The protein belongs to the galactose-1-phosphate uridylyltransferase type 2 family.

Its subcellular location is the cytoplasm. The catalysed reaction is alpha-D-galactose 1-phosphate + UDP-alpha-D-glucose = alpha-D-glucose 1-phosphate + UDP-alpha-D-galactose. The protein operates within carbohydrate metabolism; galactose metabolism. The polypeptide is Galactose-1-phosphate uridylyltransferase (Lactiplantibacillus plantarum (strain ATCC BAA-793 / NCIMB 8826 / WCFS1) (Lactobacillus plantarum)).